Here is a 159-residue protein sequence, read N- to C-terminus: NADH-quinone oxidoreductase subunit B (159 aa).

Residues cysteine 37, cysteine 38, cysteine 102, and cysteine 132 each coordinate [4Fe-4S] cluster.

This sequence belongs to the complex I 20 kDa subunit family. In terms of assembly, NDH-1 is composed of 14 different subunits. Subunits NuoB, C, D, E, F, and G constitute the peripheral sector of the complex. The cofactor is [4Fe-4S] cluster.

Its subcellular location is the cell inner membrane. The enzyme catalyses a quinone + NADH + 5 H(+)(in) = a quinol + NAD(+) + 4 H(+)(out). Functionally, NDH-1 shuttles electrons from NADH, via FMN and iron-sulfur (Fe-S) centers, to quinones in the respiratory chain. Couples the redox reaction to proton translocation (for every two electrons transferred, four hydrogen ions are translocated across the cytoplasmic membrane), and thus conserves the redox energy in a proton gradient. The chain is NADH-quinone oxidoreductase subunit B from Polaromonas naphthalenivorans (strain CJ2).